A 152-amino-acid chain; its full sequence is Xanthine-guanine phosphoribosyltransferase (152 aa).

Residues 37 to 38 (RG) and 88 to 96 (DDLVDTGNT) contribute to the 5-phospho-alpha-D-ribose 1-diphosphate site. Asp89 is a binding site for Mg(2+). The guanine site is built by Asp92 and Ile135. Residues Asp92 and Ile135 each contribute to the xanthine site. GMP contacts are provided by residues 92–96 (DTGNT) and 134–135 (WI).

It belongs to the purine/pyrimidine phosphoribosyltransferase family. XGPT subfamily. As to quaternary structure, homotetramer. Mg(2+) serves as cofactor.

It localises to the cell inner membrane. The catalysed reaction is GMP + diphosphate = guanine + 5-phospho-alpha-D-ribose 1-diphosphate. The enzyme catalyses XMP + diphosphate = xanthine + 5-phospho-alpha-D-ribose 1-diphosphate. It catalyses the reaction IMP + diphosphate = hypoxanthine + 5-phospho-alpha-D-ribose 1-diphosphate. The protein operates within purine metabolism; GMP biosynthesis via salvage pathway; GMP from guanine: step 1/1. It functions in the pathway purine metabolism; XMP biosynthesis via salvage pathway; XMP from xanthine: step 1/1. Purine salvage pathway enzyme that catalyzes the transfer of the ribosyl-5-phosphate group from 5-phospho-alpha-D-ribose 1-diphosphate (PRPP) to the N9 position of the 6-oxopurines guanine and xanthine to form the corresponding ribonucleotides GMP (guanosine 5'-monophosphate) and XMP (xanthosine 5'-monophosphate), with the release of PPi. To a lesser extent, also acts on hypoxanthine. The protein is Xanthine-guanine phosphoribosyltransferase of Mannheimia succiniciproducens (strain KCTC 0769BP / MBEL55E).